The primary structure comprises 876 residues: Alanine--tRNA ligase (876 aa).

Zn(2+) contacts are provided by His-568, His-572, Cys-670, and His-674.

The protein belongs to the class-II aminoacyl-tRNA synthetase family. The cofactor is Zn(2+).

It is found in the cytoplasm. The catalysed reaction is tRNA(Ala) + L-alanine + ATP = L-alanyl-tRNA(Ala) + AMP + diphosphate. Functionally, catalyzes the attachment of alanine to tRNA(Ala) in a two-step reaction: alanine is first activated by ATP to form Ala-AMP and then transferred to the acceptor end of tRNA(Ala). Also edits incorrectly charged Ser-tRNA(Ala) and Gly-tRNA(Ala) via its editing domain. The polypeptide is Alanine--tRNA ligase (Geotalea uraniireducens (strain Rf4) (Geobacter uraniireducens)).